A 92-amino-acid chain; its full sequence is Small ribosomal subunit protein uS19c (92 aa).

It belongs to the universal ribosomal protein uS19 family.

It localises to the plastid. The protein localises to the chloroplast. Functionally, protein S19 forms a complex with S13 that binds strongly to the 16S ribosomal RNA. The polypeptide is Small ribosomal subunit protein uS19c (Amborella trichopoda).